A 914-amino-acid chain; its full sequence is Protein translocase subunit SecA (914 aa).

Residues Gln-87, 105-109 (GEGKT), and Asp-508 each bind ATP. The Zn(2+) site is built by Cys-898, Cys-900, Cys-909, and His-910.

It belongs to the SecA family. In terms of assembly, monomer and homodimer. Part of the essential Sec protein translocation apparatus which comprises SecA, SecYEG and auxiliary proteins SecDF-YajC and YidC. Zn(2+) serves as cofactor.

The protein resides in the cell inner membrane. The protein localises to the cytoplasm. The catalysed reaction is ATP + H2O + cellular proteinSide 1 = ADP + phosphate + cellular proteinSide 2.. Its function is as follows. Part of the Sec protein translocase complex. Interacts with the SecYEG preprotein conducting channel. Has a central role in coupling the hydrolysis of ATP to the transfer of proteins into and across the cell membrane, serving both as a receptor for the preprotein-SecB complex and as an ATP-driven molecular motor driving the stepwise translocation of polypeptide chains across the membrane. This is Protein translocase subunit SecA from Xylella fastidiosa (strain M23).